A 1244-amino-acid chain; its full sequence is ATP-dependent helicase/nuclease subunit A (1244 aa).

The 472-residue stretch at 4-475 folds into the UvrD-like helicase ATP-binding domain; sequence KKWTAEQLAA…IGLSKNFRSR (472 aa). An ATP-binding site is contributed by 25 to 32; that stretch reads AAAGAGKT. In terms of domain architecture, UvrD-like helicase C-terminal spans 515 to 816; that stretch reads EDVKTATGPV…RIMSIHKSKG (302 aa). The disordered stretch occupies residues 538–559; sequence EQNTDSAEEKLTDGEEQEDLDS.

It belongs to the helicase family. AddA subfamily. Heterodimer of AddA and AddB/RexB. Requires Mg(2+) as cofactor.

The catalysed reaction is Couples ATP hydrolysis with the unwinding of duplex DNA by translocating in the 3'-5' direction.. It carries out the reaction ATP + H2O = ADP + phosphate + H(+). The heterodimer acts as both an ATP-dependent DNA helicase and an ATP-dependent, dual-direction single-stranded exonuclease. Recognizes the chi site generating a DNA molecule suitable for the initiation of homologous recombination. The AddA nuclease domain is required for chi fragment generation; this subunit has the helicase and 3' -&gt; 5' nuclease activities. This Desulforamulus reducens (strain ATCC BAA-1160 / DSM 100696 / MI-1) (Desulfotomaculum reducens) protein is ATP-dependent helicase/nuclease subunit A.